The chain runs to 83 residues: UPF0346 protein M28_Spy0369 (83 aa).

This sequence belongs to the UPF0346 family.

The protein is UPF0346 protein M28_Spy0369 of Streptococcus pyogenes serotype M28 (strain MGAS6180).